Reading from the N-terminus, the 114-residue chain is V-type proton ATPase subunit G (114 aa).

Serine 2 is subject to N-acetylserine.

The protein belongs to the V-ATPase G subunit family. In terms of assembly, V-ATPase is a heteromultimeric enzyme composed of a peripheral catalytic V1 complex (components A to H) attached to an integral membrane V0 proton pore complex (components: a, c, c', c'', d, e, f and VOA1).

The protein localises to the vacuole membrane. In terms of biological role, subunit of the V1 complex of vacuolar(H+)-ATPase (V-ATPase), a multisubunit enzyme composed of a peripheral complex (V1) that hydrolyzes ATP and a membrane integral complex (V0) that translocates protons. V-ATPase is responsible for acidifying and maintaining the pH of intracellular compartments. The protein is V-type proton ATPase subunit G of Saccharomyces cerevisiae (strain ATCC 204508 / S288c) (Baker's yeast).